The following is a 553-amino-acid chain: Formate--tetrahydrofolate ligase (553 aa).

63 to 70 (TPAGEGKS) lines the ATP pocket.

The protein belongs to the formate--tetrahydrofolate ligase family.

The catalysed reaction is (6S)-5,6,7,8-tetrahydrofolate + formate + ATP = (6R)-10-formyltetrahydrofolate + ADP + phosphate. It participates in one-carbon metabolism; tetrahydrofolate interconversion. The protein is Formate--tetrahydrofolate ligase of Limosilactobacillus fermentum (strain NBRC 3956 / LMG 18251) (Lactobacillus fermentum).